The primary structure comprises 120 residues: Holo-[acyl-carrier-protein] synthase (120 aa).

Mg(2+) contacts are provided by aspartate 6 and glutamate 55.

Belongs to the P-Pant transferase superfamily. AcpS family. Mg(2+) serves as cofactor.

The protein localises to the cytoplasm. The catalysed reaction is apo-[ACP] + CoA = holo-[ACP] + adenosine 3',5'-bisphosphate + H(+). Transfers the 4'-phosphopantetheine moiety from coenzyme A to a Ser of acyl-carrier-protein. The polypeptide is Holo-[acyl-carrier-protein] synthase (Pelodictyon phaeoclathratiforme (strain DSM 5477 / BU-1)).